The sequence spans 1145 residues: DNA polymerase subunit gamma-1, mitochondrial (1145 aa).

The transit peptide at 1 to 9 (MQFHLIRKY) directs the protein to the mitochondrion.

This sequence belongs to the DNA polymerase type-A family. Component of the DNA polymerase gamma complex consisting of two subunits: the catalytic subunit DNApol-gamma/DNApolG1 and the accessory subunit PolG2/DNApol-gamma35. Mg(2+) serves as cofactor.

The protein resides in the mitochondrion. The catalysed reaction is DNA(n) + a 2'-deoxyribonucleoside 5'-triphosphate = DNA(n+1) + diphosphate. Stimulated by KCl, and inhibited by the small molecules o 2',3'-dideoxythymidine 5'-triphosphate (d2TTP) and N-ethylmaleimide (NEM). Functionally, as the catalytic component of the DNA polymerase gamma complex is involved in the replication of mitochondrial DNA (mtDNA). Has both 5'-3' DNA polymerase and a highly mispair-specific 3'-5' exonuclease activity. At the end of mtDNA replication DNA ends are ligated to produce a closed circular mtDNA molecule, its exonuclease activity is required for formation of these ligatable ends by preventing DNA synthesis from continuing past the 5'-end of downstream DNA into duplex DNA regions. Does not possess DNA primase activity, does not catalyze strand displacement synthesis and does not contain a 5'-3' exonuclease activity to catalyze nick translation. Important for promoting the elimination of paternal mitochondrial DNA during spermatogenesis, however its exact role in this function has not yet been identified and appears to be independent of its 3'-5'-exonuclease activity and only partially dependent on its DNA polymerase activity. This Drosophila melanogaster (Fruit fly) protein is DNA polymerase subunit gamma-1, mitochondrial.